We begin with the raw amino-acid sequence, 353 residues long: Photosystem II D2 protein (353 aa).

Threonine 2 carries the N-acetylthreonine modification. The residue at position 2 (threonine 2) is a Phosphothreonine. The chain crosses the membrane as a helical span at residues 41–61; the sequence is CAYFSLGGWFTGTTFVTSWYT. Histidine 118 serves as a coordination point for chlorophyll a. A helical membrane pass occupies residues 125 to 141; it reads GFMLRQFELARSVQLRP. The pheophytin a site is built by glutamine 130 and asparagine 143. A helical transmembrane segment spans residues 153–166; that stretch reads VFVSVFLIYPLGQS. Histidine 198 contacts chlorophyll a. Residues 208–228 traverse the membrane as a helical segment; the sequence is AALLCAIHGATVENTLFEDGD. 2 residues coordinate a plastoquinone: histidine 215 and phenylalanine 262. Histidine 215 serves as a coordination point for Fe cation. Fe cation is bound at residue histidine 269. Residues 279–295 form a helical membrane-spanning segment; it reads GLWMSAIGVVGLALNLR.

Belongs to the reaction center PufL/M/PsbA/D family. In terms of assembly, PSII is composed of 1 copy each of membrane proteins PsbA, PsbB, PsbC, PsbD, PsbE, PsbF, PsbH, PsbI, PsbJ, PsbK, PsbL, PsbM, PsbT, PsbX, PsbY, PsbZ, Psb30/Ycf12, at least 3 peripheral proteins of the oxygen-evolving complex and a large number of cofactors. It forms dimeric complexes. It depends on The D1/D2 heterodimer binds P680, chlorophylls that are the primary electron donor of PSII, and subsequent electron acceptors. It shares a non-heme iron and each subunit binds pheophytin, quinone, additional chlorophylls, carotenoids and lipids. There is also a Cl(-1) ion associated with D1 and D2, which is required for oxygen evolution. The PSII complex binds additional chlorophylls, carotenoids and specific lipids. as a cofactor.

It localises to the plastid. It is found in the chloroplast thylakoid membrane. It catalyses the reaction 2 a plastoquinone + 4 hnu + 2 H2O = 2 a plastoquinol + O2. Photosystem II (PSII) is a light-driven water:plastoquinone oxidoreductase that uses light energy to abstract electrons from H(2)O, generating O(2) and a proton gradient subsequently used for ATP formation. It consists of a core antenna complex that captures photons, and an electron transfer chain that converts photonic excitation into a charge separation. The D1/D2 (PsbA/PsbD) reaction center heterodimer binds P680, the primary electron donor of PSII as well as several subsequent electron acceptors. D2 is needed for assembly of a stable PSII complex. This Physcomitrium patens (Spreading-leaved earth moss) protein is Photosystem II D2 protein.